The following is a 408-amino-acid chain: Endo-1,4-beta-xylanase A (408 aa).

An N-terminal signal peptide occupies residues 1–19; it reads MKLSASFAALALLLPFVQA. In terms of domain architecture, CBM1 spans 20-55; the sequence is QSPVWGQCGGIGWTGPTTCTAGNVCQEYSAYYSQCI. Residues 64-89 form a disordered region; it reads TSVSTAPNPPPTSHTSTSSAPSGAST. Low complexity predominate over residues 76–89; it reads SHTSTSSAPSGAST. In terms of domain architecture, GH10 spans 88–405; it reads STSTAKLNTL…KPAYDGIAIG (318 aa). E222 (proton donor) is an active-site residue. E327 serves as the catalytic Nucleophile. A disulfide bridge connects residues C355 and C361.

This sequence belongs to the glycosyl hydrolase 10 (cellulase F) family.

The protein localises to the secreted. It carries out the reaction Endohydrolysis of (1-&gt;4)-beta-D-xylosidic linkages in xylans.. It participates in glycan degradation; xylan degradation. Its function is as follows. Endo-1,4-beta-xylanase involved in the hydrolysis of xylan, a major structural heterogeneous polysaccharide found in plant biomass representing the second most abundant polysaccharide in the biosphere, after cellulose. This is Endo-1,4-beta-xylanase A (xynA) from Phanerodontia chrysosporium (White-rot fungus).